The following is a 953-amino-acid chain: Isoleucine--tRNA ligase (953 aa).

The 'HIGH' region signature appears at 57-67; the sequence is PYANGDIHIGH. Position 582 (E582) interacts with L-isoleucyl-5'-AMP. A 'KMSKS' region motif is present at residues 623-627; that stretch reads KMSKS. Residue K626 participates in ATP binding. Positions 916, 919, 936, and 939 each coordinate Zn(2+).

Belongs to the class-I aminoacyl-tRNA synthetase family. IleS type 1 subfamily. In terms of assembly, monomer. Zn(2+) serves as cofactor.

The protein localises to the cytoplasm. The catalysed reaction is tRNA(Ile) + L-isoleucine + ATP = L-isoleucyl-tRNA(Ile) + AMP + diphosphate. Catalyzes the attachment of isoleucine to tRNA(Ile). As IleRS can inadvertently accommodate and process structurally similar amino acids such as valine, to avoid such errors it has two additional distinct tRNA(Ile)-dependent editing activities. One activity is designated as 'pretransfer' editing and involves the hydrolysis of activated Val-AMP. The other activity is designated 'posttransfer' editing and involves deacylation of mischarged Val-tRNA(Ile). The polypeptide is Isoleucine--tRNA ligase (Bordetella pertussis (strain Tohama I / ATCC BAA-589 / NCTC 13251)).